Consider the following 304-residue polypeptide: Aspartate carbamoyltransferase catalytic subunit (304 aa).

Carbamoyl phosphate contacts are provided by Arg-54 and Thr-55. Residue Lys-83 participates in L-aspartate binding. 3 residues coordinate carbamoyl phosphate: Arg-104, His-132, and Gln-135. L-aspartate is bound by residues Arg-165 and Arg-226. The carbamoyl phosphate site is built by Leu-265 and Pro-266.

It belongs to the aspartate/ornithine carbamoyltransferase superfamily. ATCase family. Heterooligomer of catalytic and regulatory chains.

It carries out the reaction carbamoyl phosphate + L-aspartate = N-carbamoyl-L-aspartate + phosphate + H(+). It participates in pyrimidine metabolism; UMP biosynthesis via de novo pathway; (S)-dihydroorotate from bicarbonate: step 2/3. Catalyzes the condensation of carbamoyl phosphate and aspartate to form carbamoyl aspartate and inorganic phosphate, the committed step in the de novo pyrimidine nucleotide biosynthesis pathway. The sequence is that of Aspartate carbamoyltransferase catalytic subunit from Pyrobaculum neutrophilum (strain DSM 2338 / JCM 9278 / NBRC 100436 / V24Sta) (Thermoproteus neutrophilus).